The sequence spans 85 residues: Protein RnfH (85 aa).

Belongs to the UPF0125 (RnfH) family.

The chain is Protein RnfH from Cereibacter sphaeroides (strain ATCC 17023 / DSM 158 / JCM 6121 / CCUG 31486 / LMG 2827 / NBRC 12203 / NCIMB 8253 / ATH 2.4.1.) (Rhodobacter sphaeroides).